We begin with the raw amino-acid sequence, 226 residues long: PKHD-type hydroxylase PiuC (226 aa).

The Fe2OG dioxygenase domain occupies 78–178 (KVFPPLFNCY…RYASFFWTQS (101 aa)). Fe cation-binding residues include His-96, Asp-98, and His-159. A 2-oxoglutarate-binding site is contributed by Arg-169.

Fe(2+) is required as a cofactor. It depends on L-ascorbate as a cofactor.

This is PKHD-type hydroxylase PiuC (piuC) from Pseudomonas aeruginosa (strain ATCC 15692 / DSM 22644 / CIP 104116 / JCM 14847 / LMG 12228 / 1C / PRS 101 / PAO1).